The chain runs to 246 residues: Uridylate kinase (246 aa).

Lysine 20–glycine 23 is a binding site for ATP. The involved in allosteric activation by GTP stretch occupies residues glycine 28–glycine 33. Glycine 62 provides a ligand contact to UMP. Residues glycine 63 and arginine 67 each coordinate ATP. UMP is bound by residues aspartate 82 and threonine 143–threonine 150. ATP-binding residues include threonine 170, tyrosine 176, and aspartate 179.

It belongs to the UMP kinase family. As to quaternary structure, homohexamer.

The protein localises to the cytoplasm. It carries out the reaction UMP + ATP = UDP + ADP. Its pathway is pyrimidine metabolism; CTP biosynthesis via de novo pathway; UDP from UMP (UMPK route): step 1/1. With respect to regulation, allosterically activated by GTP. Inhibited by UTP. In terms of biological role, catalyzes the reversible phosphorylation of UMP to UDP. The sequence is that of Uridylate kinase from Cereibacter sphaeroides (strain ATCC 17023 / DSM 158 / JCM 6121 / CCUG 31486 / LMG 2827 / NBRC 12203 / NCIMB 8253 / ATH 2.4.1.) (Rhodobacter sphaeroides).